A 206-amino-acid polypeptide reads, in one-letter code: MDLTVKTLEGKDAGKVSLSDAIFGLEPREDIIARVVRWQLAKRQQGTHKSKGRAEVSRTGAKMYKQKGTGRARHHSARAPQFRGGGKAHGPVVRSHAHDLPKKIRALGLRHALSAKLKAEDIIVIDDLVANEAKTKALAGAFASLGLTNALIIGGAEIEGNFKLAAQNIPNVDVLPVQGINVYDILRRGKLVLSKAAVEALEERFK.

Positions 63-93 (MYKQKGTGRARHHSARAPQFRGGGKAHGPVV) are disordered. Over residues 64 to 77 (YKQKGTGRARHHSA) the composition is skewed to basic residues.

It belongs to the universal ribosomal protein uL4 family. In terms of assembly, part of the 50S ribosomal subunit.

In terms of biological role, one of the primary rRNA binding proteins, this protein initially binds near the 5'-end of the 23S rRNA. It is important during the early stages of 50S assembly. It makes multiple contacts with different domains of the 23S rRNA in the assembled 50S subunit and ribosome. Its function is as follows. Forms part of the polypeptide exit tunnel. The protein is Large ribosomal subunit protein uL4 of Rhizobium meliloti (strain 1021) (Ensifer meliloti).